The chain runs to 540 residues: Hydroxylamine reductase (540 aa).

The [4Fe-4S] cluster site is built by Cys-3, Cys-6, Cys-15, and Cys-21. Residues His-236, Glu-260, Cys-304, Cys-395, Cys-423, Cys-448, Glu-483, and Lys-485 each coordinate hybrid [4Fe-2O-2S] cluster. Cysteine persulfide is present on Cys-395.

This sequence belongs to the HCP family. [4Fe-4S] cluster is required as a cofactor. Hybrid [4Fe-2O-2S] cluster serves as cofactor.

It localises to the cytoplasm. It catalyses the reaction A + NH4(+) + H2O = hydroxylamine + AH2 + H(+). In terms of biological role, catalyzes the reduction of hydroxylamine to form NH(3) and H(2)O. The protein is Hydroxylamine reductase of Methanosarcina mazei (strain ATCC BAA-159 / DSM 3647 / Goe1 / Go1 / JCM 11833 / OCM 88) (Methanosarcina frisia).